The sequence spans 267 residues: DNA repair protein RecO (267 aa).

Belongs to the RecO family.

Involved in DNA repair and RecF pathway recombination. This is DNA repair protein RecO from Mesoplasma florum (strain ATCC 33453 / NBRC 100688 / NCTC 11704 / L1) (Acholeplasma florum).